The sequence spans 243 residues: Uridylate kinase (243 aa).

An ATP-binding site is contributed by 18 to 21; it reads KLGG. Glycine 59 contributes to the UMP binding site. Residues glycine 60 and arginine 64 each contribute to the ATP site. Residues aspartate 79 and 140–147 contribute to the UMP site; that span reads MGMPYFST. ATP-binding residues include tyrosine 173 and aspartate 176.

Belongs to the UMP kinase family. In terms of assembly, homohexamer.

It is found in the cytoplasm. It catalyses the reaction UMP + ATP = UDP + ADP. It participates in pyrimidine metabolism; CTP biosynthesis via de novo pathway; UDP from UMP (UMPK route): step 1/1. With respect to regulation, inhibited by UTP. Catalyzes the reversible phosphorylation of UMP to UDP. This Corynebacterium diphtheriae (strain ATCC 700971 / NCTC 13129 / Biotype gravis) protein is Uridylate kinase.